A 455-amino-acid polypeptide reads, in one-letter code: Alcohol acyl transferase 1 allele GSb (455 aa).

Active-site proton acceptor residues include His164 and Asn385.

This sequence belongs to the plant acyltransferase family. Expressed at very low levels in the skin of ripe fruit.

Involved in the biosynthesis of volatile esters which confer ripe apple fruit flavor. Alcohol acyl transferase that can use a wide range of alcohols as substrate to produce esters. This Malus domestica (Apple) protein is Alcohol acyl transferase 1 allele GSb.